The primary structure comprises 710 residues: Adenylosuccinate synthetase (710 aa).

The segment at 1 to 54 (MPVRRYGGRYNSSSPGVSNALNPSRTAGWPLSPSPATGSKPASTHHDPVPQEAY) is disordered. Residues 10 to 25 (YNSSSPGVSNALNPSR) are compositionally biased toward polar residues. Over residues 44–54 (THHDPVPQEAY) the composition is skewed to basic and acidic residues. GTP-binding positions include 180–186 (GDEGKGK) and 210–212 (GHT). Asp-181 serves as the catalytic Proton acceptor. Mg(2+) contacts are provided by Asp-181 and Gly-210. IMP contacts are provided by residues 181–184 (DEGK), 208–211 (NAGH), Thr-295, Lys-309, Gln-421, Thr-437, and Lys-567. His-211 (proton donor) is an active-site residue. 563 to 569 (AVTKKPR) contributes to the substrate binding site. GTP is bound by residues Arg-569 and 697–699 (GNG).

This sequence belongs to the adenylosuccinate synthetase family. As to quaternary structure, homodimer. Mg(2+) is required as a cofactor.

It is found in the cytoplasm. It carries out the reaction IMP + L-aspartate + GTP = N(6)-(1,2-dicarboxyethyl)-AMP + GDP + phosphate + 2 H(+). Its pathway is purine metabolism; AMP biosynthesis via de novo pathway; AMP from IMP: step 1/2. Its function is as follows. Plays an important role in the salvage pathway for purine nucleotide biosynthesis. Catalyzes the first committed step in the biosynthesis of AMP from IMP. The polypeptide is Adenylosuccinate synthetase (Leishmania major).